The primary structure comprises 291 residues: ATP synthase gamma chain (291 aa).

Belongs to the ATPase gamma chain family. As to quaternary structure, F-type ATPases have 2 components, CF(1) - the catalytic core - and CF(0) - the membrane proton channel. CF(1) has five subunits: alpha(3), beta(3), gamma(1), delta(1), epsilon(1). CF(0) has three main subunits: a, b and c.

The protein resides in the cell inner membrane. Functionally, produces ATP from ADP in the presence of a proton gradient across the membrane. The gamma chain is believed to be important in regulating ATPase activity and the flow of protons through the CF(0) complex. The polypeptide is ATP synthase gamma chain (Syntrophus aciditrophicus (strain SB)).